Here is a 310-residue protein sequence, read N- to C-terminus: Protease HtpX homolog (310 aa).

2 helical membrane passes run 7–27 (SVML…LIGG) and 29–49 (AGMT…YWYS). Residue His131 participates in Zn(2+) binding. Glu132 is a catalytic residue. His135 serves as a coordination point for Zn(2+). 2 consecutive transmembrane segments (helical) span residues 141–161 (ILIG…ASMA) and 178–198 (PLGF…AALI). Residue Glu207 coordinates Zn(2+). Positions 277 to 310 (LTGARPQSGGAPSGPERTARNAEDSAKDFWDSLK) are disordered. Positions 293–310 (RTARNAEDSAKDFWDSLK) are enriched in basic and acidic residues.

The protein belongs to the peptidase M48B family. Requires Zn(2+) as cofactor.

The protein resides in the cell inner membrane. The sequence is that of Protease HtpX homolog from Desulfatibacillum aliphaticivorans.